Consider the following 230-residue polypeptide: Protein LURP-one-related 11 (230 aa).

Belongs to the LOR family.

Its function is as follows. Might be related to the phospholipid scramblase and tubby-like superfamily of membrane tethered transcription factors. This is Protein LURP-one-related 11 from Arabidopsis thaliana (Mouse-ear cress).